The sequence spans 78 residues: Large ribosomal subunit protein bL31 (78 aa).

Cys-16, Cys-18, Cys-38, and Cys-41 together coordinate Zn(2+).

This sequence belongs to the bacterial ribosomal protein bL31 family. Type A subfamily. Part of the 50S ribosomal subunit. Requires Zn(2+) as cofactor.

In terms of biological role, binds the 23S rRNA. In Frankia casuarinae (strain DSM 45818 / CECT 9043 / HFP020203 / CcI3), this protein is Large ribosomal subunit protein bL31.